The chain runs to 1045 residues: MKMLQGRLPLTVLHLFLLLGGGMTQQRPQGPIKDINGLPAQGPTVSVRPGPDPSDKVTFQDCPVDIFFVLDTSESVALRVKPFKTLVTQVKEFTKKFIDKLTSRYYRCDRNLVWNAGALHYSDEVILINSLTRDMKTLRDNVETVEYIGKGTHTDCAIKRGIEEVLIGGSHQKENKYLIVVTDGHPLEGYKEPCGGLEDAANEAKHLGIKVFSVAISPNHLEPRLSVIASDASHRRNFTATSAVGLTDDEIDNTIDTIIDMIKENAEQGCCTYECKPSRGLSGPSGPPGYEGEIGKPGLPGDRGLPGDPGRQGDIGPVGYQGMKGDQGIRGEKGGRGAKGSKGDKGKRGIDGVDGQKGEDGYNGLPGCKGSPGFDGAPGSSGPKGDPGPYGTKGEKGVPGTPGTGGRPGNTGNTGDKGDPGSNGLAGEKGESGDEGDAGADGSPGKRGEAGELGPPGVSGGRGARGEKGEPGPPGDQGRDGPAGPFGDPGEAGPQGPKGYRGDEGPRGPEGPKGPRGAKGLPGEQGIAGERGDDGRPGNGTDGFPGFQGYPGSRGDPGSNGTKGYPGPKGDEGEQGEPGDDNVSPGPPGPKGAKGYRGPEGPPGPPGPGGPPGPDECEILDIIKRMCSCCECTCGPLDLLFVLDSSESIGLSNFQISKDFILKVIDRLSRDEHVKFDADNSHVGVVQYSHGQTQEVVAMGDSSIQSIGQLKEAVKNLKWIAGGTWTGEALAFTKDNLLKRFTLEKKIALVLTDGHSDILRDKTPLNTLCEVTPVVSVGVGDIFQNAPNSDQLVQISCGGKPYSKGLSLQRTSFAELLDDGFLHNVTSHMCSDRKCPDYTCPITYEGPADITMLVDSSTRVGNQHFQTSKSFVKLLAERFLKAKPPPSGSARVSVVQYSGQNQQIVEAQFLTNYTVLEVPVDNMQFINGATNVVSALRAVTELYREDSLAGVNKKLLVFSDGNTQEEKGLLKVVQDAQSAGIEIYVLAVGSRLNYPNLQVMLTGSAADIAGPFPEERLFRVPDYTSLLQGVRYQSISRRIALKSSQ.

The first 24 residues, 1 to 24 (MKMLQGRLPLTVLHLFLLLGGGMT), serve as a signal peptide directing secretion. The region spanning 65–255 (DIFFVLDTSE…LTDDEIDNTI (191 aa)) is the VWFA 1 domain. Positions 277–613 (PSRGLSGPSG…GPPGPGGPPG (337 aa)) are disordered. The tract at residues 280-540 (GLSGPSGPPG…RGDDGRPGNG (261 aa)) is triple-helical region. Over residues 297-309 (PGLPGDRGLPGDP) the composition is skewed to low complexity. The span at 327–360 (QGIRGEKGGRGAKGSKGDKGKRGIDGVDGQKGED) shows a compositional bias: basic and acidic residues. The segment covering 375 to 392 (DGAPGSSGPKGDPGPYGT) has biased composition (low complexity). Residues 400-409 (GTPGTGGRPG) show a composition bias toward gly residues. 2 consecutive short sequence motifs (cell attachment site) follow at residues 501–503 (RGD) and 554–556 (RGD). The span at 600–613 (EGPPGPPGPGGPPG) shows a compositional bias: pro residues. VWFA domains are found at residues 638–825 (DLLF…LHNV) and 849–1035 (DITM…YQSI).

Belongs to the type VI collagen family.

Its subcellular location is the secreted. The protein resides in the extracellular space. It is found in the extracellular matrix. Collagen VI acts as a cell-binding protein. This is Collagen alpha-1(VI) chain (col6a1) from Xenopus laevis (African clawed frog).